The chain runs to 1091 residues: Multiple epidermal growth factor-like domains protein 11 (1091 aa).

The first 18 residues, 1–18 (MAPSAVGLLVFLLQAALA), serve as a signal peptide directing secretion. The Extracellular segment spans residues 19–847 (LNPEDPNVCS…SPALGAERHS (829 aa)). In terms of domain architecture, EMI spans 23 to 100 (DPNVCSHWES…YYENGDFCIP (78 aa)). 14 disulfide bridges follow: cysteine 27–cysteine 88, cysteine 53–cysteine 62, cysteine 87–cysteine 98, cysteine 102–cysteine 117, cysteine 119–cysteine 128, cysteine 145–cysteine 153, cysteine 147–cysteine 160, cysteine 162–cysteine 171, cysteine 184–cysteine 196, cysteine 190–cysteine 203, cysteine 205–cysteine 214, cysteine 227–cysteine 239, cysteine 233–cysteine 246, and cysteine 248–cysteine 257. EGF-like domains are found at residues 94 to 129 (NGDFCIPLCTEECMHGRCVSPDTCHCEPGWGGPDCS), 142 to 172 (SNRCQCQNGALCNPITGACVCAPGFRGWRCE), 180 to 215 (HGKGCQLLCQCHHGASCDPRTGECLCAPGYTGVYCE), 223 to 258 (HGAHCELRCPCQNGGTCHHITGECACPPGWTGAVCA), 266 to 301 (FGQNCSQDCPCHHGGQCDHVTGQCHCTAGYMGDRCQ), 314 to 344 (SQRCDCHNGGQCSPATGACECEPGYKGPSCQ), 398 to 433 (YGNGCQLPCTCQNGADCHSITGSCTCAPGFMGEVCA), 441 to 476 (YGPNCSSVCSCSNGGTCSPVDGSCTCREGWQGLDCS), and 484 to 519 (WGLNCNETCICANGAACSPFDGSCACTPGWLGDSCE). The N-linked (GlcNAc...) asparagine glycan is linked to asparagine 269. 15 disulfide bridges follow: cysteine 270-cysteine 282, cysteine 276-cysteine 289, cysteine 291-cysteine 300, cysteine 317-cysteine 325, cysteine 319-cysteine 332, cysteine 334-cysteine 343, cysteine 402-cysteine 414, cysteine 408-cysteine 421, cysteine 423-cysteine 432, cysteine 445-cysteine 457, cysteine 451-cysteine 464, cysteine 466-cysteine 475, cysteine 488-cysteine 500, cysteine 494-cysteine 507, and cysteine 509-cysteine 518. N-linked (GlcNAc...) asparagine glycosylation occurs at asparagine 530. 6 EGF-like domains span residues 570 to 605 (WGPNCSVSCSCENGGSCSPEDGSCECAPGFRGPLCQ), 613 to 650 (YGHGCAQPCPLCVHSRGPCHHISGICECLPGFSGALCN), 658 to 693 (FGQDCAQLCSCANNGTCSPIDGSCQCFPGWIGKDCS), 706 to 736 (FHTCSCHNGASCSAEDGACHCTPGWTGLFCT), 749 to 779 (GHICQCQNGASCDHITGKCTCRTGFSGRHCE), and 787 to 822 (FGYGCQQLCECMNNATCDHVTGTCYCSPGFKGIRCD). 18 disulfide bridges follow: cysteine 574-cysteine 586, cysteine 580-cysteine 593, cysteine 595-cysteine 604, cysteine 617-cysteine 631, cysteine 621-cysteine 638, cysteine 640-cysteine 649, cysteine 662-cysteine 674, cysteine 668-cysteine 681, cysteine 683-cysteine 692, cysteine 709-cysteine 717, cysteine 711-cysteine 724, cysteine 726-cysteine 735, cysteine 752-cysteine 760, cysteine 754-cysteine 767, cysteine 769-cysteine 778, cysteine 791-cysteine 803, cysteine 797-cysteine 810, and cysteine 812-cysteine 821. The chain crosses the membrane as a helical span at residues 848–868 (VGAVTGIVLLLFLVVVLLGLF). Residues 869–1091 (AWRRRRQKEK…NIYEVGRCLT (223 aa)) lie on the Cytoplasmic side of the membrane.

This sequence belongs to the MEGF family. As to quaternary structure, homomer. Does not interact with MEGF10.

Its subcellular location is the cell membrane. It is found in the basolateral cell membrane. May regulate the mosaic spacing of specific neuron subtypes in the retina through homotypic retinal neuron repulsion. Mosaics provide a mechanism to distribute each cell type evenly across the retina, ensuring that all parts of the visual field have access to a full set of processing elements. This is Multiple epidermal growth factor-like domains protein 11 (Megf11) from Mus musculus (Mouse).